The chain runs to 921 residues: Isoleucine--tRNA ligase (921 aa).

The short motif at 57-67 is the 'HIGH' region element; the sequence is PYANGDIHMGH. An L-isoleucyl-5'-AMP-binding site is contributed by E552. The 'KMSKS' region signature appears at 593–597; that stretch reads KMSKS. K596 contacts ATP. C888, C891, C908, and C911 together coordinate Zn(2+).

The protein belongs to the class-I aminoacyl-tRNA synthetase family. IleS type 1 subfamily. In terms of assembly, monomer. The cofactor is Zn(2+).

It is found in the cytoplasm. It carries out the reaction tRNA(Ile) + L-isoleucine + ATP = L-isoleucyl-tRNA(Ile) + AMP + diphosphate. In terms of biological role, catalyzes the attachment of isoleucine to tRNA(Ile). As IleRS can inadvertently accommodate and process structurally similar amino acids such as valine, to avoid such errors it has two additional distinct tRNA(Ile)-dependent editing activities. One activity is designated as 'pretransfer' editing and involves the hydrolysis of activated Val-AMP. The other activity is designated 'posttransfer' editing and involves deacylation of mischarged Val-tRNA(Ile). This chain is Isoleucine--tRNA ligase, found in Bacillus mycoides (strain KBAB4) (Bacillus weihenstephanensis).